Here is a 272-residue protein sequence, read N- to C-terminus: MKANIACVQMAPKVCDVKHNLQKMSSYVHEVMESNPSTNLILFPELITSGYECGNTFTQIAEIAGEGPSFKTMSNLAAKYHVNIIYGFPEKEEKQSNIIYNSCIYITENGNLGGVYRKVHLFDTERKHFKKGSDFPIFETSFGKLGVMICWDTAFPEVARIHALNGADLLVVATNWENPYSDDWDLVTKARAFENCIPLVAANRVGTDEKLSFFGHSKIIGPTGKVIKALDEEKEGVISYTVDLDDAKPLRKNYYTFFEDRMPDLYKRLLSP.

The CN hydrolase domain maps to 3 to 244; it reads ANIACVQMAP…EGVISYTVDL (242 aa). Glu45 serves as the catalytic Proton acceptor. Lys118 acts as the Proton donor in catalysis. Cys150 (nucleophile) is an active-site residue.

It belongs to the carbon-nitrogen hydrolase superfamily.

It is found in the cytoplasm. The protein localises to the nucleus. This chain is Probable nitrilase C965.09, found in Schizosaccharomyces pombe (strain 972 / ATCC 24843) (Fission yeast).